Reading from the N-terminus, the 160-residue chain is Troponin C, skeletal muscle (160 aa).

Thr2 is modified (N-acetylthreonine). EF-hand domains follow at residues 15–50, 51–86, 91–126, and 127–160; these read EMIA…LGQT, PTKE…QMKE, KSEE…SGEH, and VTDE…EGVQ. Residues Asp28, Asp30, Asp34, Glu39, Asp64, Asp66, Ser68, Thr70, Glu75, Asp104, Asn106, Asp108, Tyr110, Glu115, Asp140, Asn142, Asp144, Arg146, and Glu151 each contribute to the Ca(2+) site.

The protein belongs to the troponin C family.

Troponin is the central regulatory protein of striated muscle contraction. Tn consists of three components: Tn-I which is the inhibitor of actomyosin ATPase, Tn-T which contains the binding site for tropomyosin and Tn-C. The binding of calcium to Tn-C abolishes the inhibitory action of Tn on actin filaments. The polypeptide is Troponin C, skeletal muscle (TNNC2) (Homo sapiens (Human)).